The primary structure comprises 376 residues: MAKRDYYEVLGISKSASADEIKKAYRKLSKQYHPDINKEAGADEKFKEISEAYEALSDPQKRAQYDQYGHVDPNQGFGGGAGGGFGGGGFSGFEDIFDTFFGGGGRQQDPNAPRQGSDLQYTMRLKFKEAIFGKDAEIEIPREENCDTCHGSGAKPGTTPEKCSHCGGKGSINVEQNTPFGRVVNKRTCQYCNGTGKEIKEKCPTCHGKGRVTKTKKIKVKVPAGVNDGQQMRVSGEGEAGINGGPNGDLYVVFVVIPDEFFEREADDIYVEVPITFVQATLGDEIDVPTVHGKVRLKIPSGTQTGTTFRLRGKGVPHLRGNGTGDQHVIVKVIVPKKLDDKQKEILREFASTTGDKVDEQTSGFFDKMKRAFKGD.

Residues 5–69 form the J domain; sequence DYYEVLGISK…QKRAQYDQYG (65 aa). A CR-type zinc finger spans residues 133-215; it reads GKDAEIEIPR…CHGKGRVTKT (83 aa). Positions 146, 149, 163, 166, 189, 192, 203, and 206 each coordinate Zn(2+). 4 CXXCXGXG motif repeats span residues 146 to 153, 163 to 170, 189 to 196, and 203 to 210; these read CDTCHGSG, CSHCGGKG, CQYCNGTG, and CPTCHGKG.

Belongs to the DnaJ family. As to quaternary structure, homodimer. The cofactor is Zn(2+).

The protein localises to the cytoplasm. Participates actively in the response to hyperosmotic and heat shock by preventing the aggregation of stress-denatured proteins and by disaggregating proteins, also in an autonomous, DnaK-independent fashion. Unfolded proteins bind initially to DnaJ; upon interaction with the DnaJ-bound protein, DnaK hydrolyzes its bound ATP, resulting in the formation of a stable complex. GrpE releases ADP from DnaK; ATP binding to DnaK triggers the release of the substrate protein, thus completing the reaction cycle. Several rounds of ATP-dependent interactions between DnaJ, DnaK and GrpE are required for fully efficient folding. Also involved, together with DnaK and GrpE, in the DNA replication of plasmids through activation of initiation proteins. The sequence is that of Chaperone protein DnaJ from Listeria monocytogenes serotype 4a (strain HCC23).